A 326-amino-acid chain; its full sequence is Phosphotriesterase homology protein (326 aa).

Histidine 22, histidine 24, lysine 145, histidine 178, histidine 207, and aspartate 264 together coordinate Zn(2+). An N6-carboxylysine modification is found at lysine 145.

Belongs to the metallo-dependent hydrolases superfamily. Phosphotriesterase family. Zn(2+) serves as cofactor.

The sequence is that of Phosphotriesterase homology protein (php) from Mycobacterium tuberculosis (strain CDC 1551 / Oshkosh).